We begin with the raw amino-acid sequence, 176 residues long: Large ribosomal subunit protein uL6 (176 aa).

Belongs to the universal ribosomal protein uL6 family. Part of the 50S ribosomal subunit.

Its function is as follows. This protein binds to the 23S rRNA, and is important in its secondary structure. It is located near the subunit interface in the base of the L7/L12 stalk, and near the tRNA binding site of the peptidyltransferase center. This is Large ribosomal subunit protein uL6 from Methanospirillum hungatei JF-1 (strain ATCC 27890 / DSM 864 / NBRC 100397 / JF-1).